We begin with the raw amino-acid sequence, 271 residues long: Thiazole synthase (271 aa).

The active-site Schiff-base intermediate with DXP is the Lys-104. 1-deoxy-D-xylulose 5-phosphate is bound by residues Gly-165, 192 to 193 (AG), and 214 to 215 (NT).

This sequence belongs to the ThiG family. Homotetramer. Forms heterodimers with either ThiH or ThiS.

It localises to the cytoplasm. It catalyses the reaction [ThiS sulfur-carrier protein]-C-terminal-Gly-aminoethanethioate + 2-iminoacetate + 1-deoxy-D-xylulose 5-phosphate = [ThiS sulfur-carrier protein]-C-terminal Gly-Gly + 2-[(2R,5Z)-2-carboxy-4-methylthiazol-5(2H)-ylidene]ethyl phosphate + 2 H2O + H(+). It functions in the pathway cofactor biosynthesis; thiamine diphosphate biosynthesis. Functionally, catalyzes the rearrangement of 1-deoxy-D-xylulose 5-phosphate (DXP) to produce the thiazole phosphate moiety of thiamine. Sulfur is provided by the thiocarboxylate moiety of the carrier protein ThiS. In vitro, sulfur can be provided by H(2)S. The polypeptide is Thiazole synthase (Burkholderia lata (strain ATCC 17760 / DSM 23089 / LMG 22485 / NCIMB 9086 / R18194 / 383)).